We begin with the raw amino-acid sequence, 308 residues long: NADH-cytochrome b5 reductase 1 (308 aa).

The chain crosses the membrane as a helical span at residues 29-49 (VASSPAFLVAAAAIVIAAAFY). Positions 64–167 (SIWKEFPLQK…KGPKGNFKYT (104 aa)) constitute an FAD-binding FR-type domain. Residues 147 to 162 (ASLK…GPKG) and 173 to 205 (HLGM…NITL) each bind FAD.

The protein belongs to the flavoprotein pyridine nucleotide cytochrome reductase family. In terms of assembly, monomer. Component of the 2-(3-amino-3-carboxypropyl)histidine synthase complex composed of DPH1, DPH2, DPH3 and a NADH-dependent reductase, predominantly MCR1.1. Requires FAD as cofactor.

The protein localises to the mitochondrion outer membrane. The enzyme catalyses 2 Fe(III)-[cytochrome b5] + NADH = 2 Fe(II)-[cytochrome b5] + NAD(+) + H(+). It catalyses the reaction 2 Fe(3+)-[Dph3] + NADH = 2 Fe(2+)-[Dph3] + NAD(+) + H(+). It functions in the pathway protein modification; peptidyl-diphthamide biosynthesis. Functionally, NADH-dependent reductase for DPH3 and cytochrome b5. Required for the first step of diphthamide biosynthesis, a post-translational modification of histidine which occurs in elongation factor 2. DPH1 and DPH2 transfer a 3-amino-3-carboxypropyl (ACP) group from S-adenosyl-L-methionine (SAM) to a histidine residue, the reaction is assisted by a reduction system comprising DPH3 and a NADH-dependent reductase, predominantly MCR1.1. By reducing DPH3, also involved in the formation of the tRNA wobble base modification mcm5s 2U (5-methoxycarbonylmethyl-2-thiouridine), mediated by the elongator complex. The cytochrome b5/NADH cytochrome b5 reductase electron transfer system supports the catalytic activity of several sterol biosynthetic enzymes. The sequence is that of NADH-cytochrome b5 reductase 1 (MCR1.1) from Laccaria bicolor (strain S238N-H82 / ATCC MYA-4686) (Bicoloured deceiver).